Consider the following 96-residue polypeptide: Growth-regulated alpha protein (96 aa).

A signal peptide spans 1–24 (MIPATRSLLCAALLLLATSRLATG). Disulfide bonds link Cys33–Cys59 and Cys35–Cys75.

The protein belongs to the intercrine alpha (chemokine CxC) family. In terms of processing, the N-terminal processed form KC(5-72) is produced by proteolytic cleavage after secretion from bone marrow stromal cells.

The protein resides in the secreted. Functionally, has chemotactic activity for neutrophils. Contributes to neutrophil activation during inflammation. Hematoregulatory chemokine, which, in vitro, suppresses hematopoietic progenitor cell proliferation. KC(5-72) shows a highly enhanced hematopoietic activity. The sequence is that of Growth-regulated alpha protein (Cxcl1) from Mus musculus (Mouse).